Here is a 116-residue protein sequence, read N- to C-terminus: Large ribosomal subunit protein bL20 (116 aa).

Belongs to the bacterial ribosomal protein bL20 family.

Binds directly to 23S ribosomal RNA and is necessary for the in vitro assembly process of the 50S ribosomal subunit. It is not involved in the protein synthesizing functions of that subunit. The sequence is that of Large ribosomal subunit protein bL20 from Nautilia profundicola (strain ATCC BAA-1463 / DSM 18972 / AmH).